The sequence spans 178 residues: Nicotinamide-nucleotide adenylyltransferase (178 aa).

It belongs to the archaeal NMN adenylyltransferase family. Homohexamer.

It is found in the cytoplasm. It catalyses the reaction beta-nicotinamide D-ribonucleotide + ATP + H(+) = diphosphate + NAD(+). The protein operates within cofactor biosynthesis; NAD(+) biosynthesis; NAD(+) from nicotinamide D-ribonucleotide: step 1/1. The chain is Nicotinamide-nucleotide adenylyltransferase from Methanothermobacter thermautotrophicus (strain ATCC 29096 / DSM 1053 / JCM 10044 / NBRC 100330 / Delta H) (Methanobacterium thermoautotrophicum).